The sequence spans 440 residues: Ferredoxin--NADP reductase (440 aa).

Residues 17–75 (SRVFVYEVVGMRQNEETDQTNYPIRKSGSVFIRVPYNRMNQEMQRITRLGGKIVSIQTV) form the CpcD-like domain. Positions 93–142 (ASSETAKSEGNGKATPVKTDSGAKGFAKPPAEEQLKKKDNKGNTMTQAKA) are disordered. Residues 122–133 (PAEEQLKKKDNK) are compositionally biased toward basic and acidic residues. One can recognise an FAD-binding FR-type domain in the interval 155-279 (NAPFIGKVIS…TGPVGKEMLL (125 aa)). Residues 214-217 (RLYS), 235-237 (CVR), Tyr-241, 253-255 (VCS), and Thr-294 each bind FAD. Ser-217 and Arg-237 together coordinate NADP(+). NADP(+)-binding positions include Thr-294, 330-331 (VP), 360-361 (SR), 370-374 (RMYIQ), 399-400 (GL), and Glu-438.

This sequence belongs to the ferredoxin--NADP reductase type 1 family. The cofactor is FAD.

Its subcellular location is the cellular thylakoid membrane. The catalysed reaction is 2 reduced [2Fe-2S]-[ferredoxin] + NADP(+) + H(+) = 2 oxidized [2Fe-2S]-[ferredoxin] + NADPH. The protein is Ferredoxin--NADP reductase (petH) of Trichormus variabilis (strain ATCC 29413 / PCC 7937) (Anabaena variabilis).